Reading from the N-terminus, the 779-residue chain is Mediator of RNA polymerase II transcription subunit 15 (779 aa).

Composition is skewed to polar residues over residues 70–90 (NKNQQNPAGGSQDGGNPNQQG) and 98–108 (ALQTLATQGTR). Disordered regions lie at residues 70–131 (NKNQ…GGNA), 209–407 (NPMQ…VPIG), 437–512 (FLRQ…NPQE), and 629–649 (PAKQPRLAIDEPSTSGSTGSQ). Residues 114–130 (GQMGPGGPMGNQMGGGN) are compositionally biased toward gly residues. Composition is skewed to low complexity over residues 209–232 (NPMQMGVSGMPQGAGQQQPQQPQG) and 240–270 (PNQMNPMGGMGMQVNPGGHMNQNAINQQMNQ). Gly residues predominate over residues 274–284 (SSGGNQMGNLG). Composition is skewed to low complexity over residues 285 to 295 (GNSPMNPGNMG), 304 to 329 (QQMPPGMNPNQQQLGMAGGQMNQMNQ), and 339 to 350 (GPVQQQQQPGQV). Residues 351 to 361 (GMAGMGPGGPG) show a composition bias toward gly residues. Composition is skewed to low complexity over residues 362 to 383 (NLQQQNNPQQQSQGGPNAAPGQ), 393 to 402 (NMQAMGNQGN), and 451 to 468 (GPGSIGPQSHPGQMIPSP). Polar residues-rich tracts occupy residues 477–500 (QVSSNIPAPRNIGQSPGQSLNTPG) and 640–649 (PSTSGSTGSQ).

It belongs to the Mediator complex subunit 15 family. As to quaternary structure, component of the Mediator complex.

The protein localises to the nucleus. Component of the Mediator complex, a coactivator involved in the regulated transcription of nearly all RNA polymerase II-dependent genes. Mediator functions as a bridge to convey information from gene-specific regulatory proteins to the basal RNA polymerase II transcription machinery. Mediator is recruited to promoters by direct interactions with regulatory proteins and serves as a scaffold for the assembly of a functional preinitiation complex with RNA polymerase II and the general transcription factors. This is Mediator of RNA polymerase II transcription subunit 15 (MED15) from Aedes aegypti (Yellowfever mosquito).